A 130-amino-acid polypeptide reads, in one-letter code: Large ribosomal subunit protein uL14 (130 aa).

Belongs to the universal ribosomal protein uL14 family. As to quaternary structure, part of the 50S ribosomal subunit. Forms a cluster with proteins L3 and L19. In the 70S ribosome, L14 and L19 interact and together make contacts with the 16S rRNA in bridges B5 and B8.

Functionally, binds to 23S rRNA. Forms part of two intersubunit bridges in the 70S ribosome. This chain is Large ribosomal subunit protein uL14, found in Leptospira biflexa serovar Patoc (strain Patoc 1 / Ames).